The chain runs to 257 residues: uncharacterized protein (257 aa).

The signal sequence occupies residues 1–22 (MGYLKRFALYISVMILMFAIAG). The N-palmitoyl cysteine moiety is linked to residue Cys23. Cys23 carries S-diacylglycerol cysteine lipidation.

The protein belongs to the staphylococcal tandem lipoprotein family.

The protein localises to the cell membrane. This is an uncharacterized protein from Staphylococcus aureus (strain MRSA252).